Reading from the N-terminus, the 349-residue chain is MNRKARRCLGHLFLSLGMVYLRIGGFSTVVALGASIICNKIPGLAPRQRAICQSRPDAIIVIGEGSQMGLDECQFQFRNGRWNCSALGERTVFGKELKVGSREAAFTYAIIAAGVAHAITAACTQGNLSDCGCDKEKQGQYHRDEGWKWGGCSADIRYGIGFAKVFVDAREIKQNARTLMNLHNNEAGRKILEENMKLECKCHGVSGSCTTKTCWTTLPQFRELGYVLKDKYNEAVHVEPVRASRNKRPTFLKIKKPLSYRKPMDTDLVYIEKSPNYCEEDPVTGSVGTQGRACNKTAPQASGCDLMCCGRGYNTHQYARVWQCNCKFHWCCYVKCNTCSERTEMYTCK.

An N-terminal signal peptide occupies residues 1–31 (MNRKARRCLGHLFLSLGMVYLRIGGFSTVVA). Disulfide bonds link Cys73/Cys84, Cys123/Cys131, Cys133/Cys152, Cys200/Cys214, and Cys202/Cys209. 2 N-linked (GlcNAc...) asparagine glycosylation sites follow: Asn83 and Asn127. The O-palmitoleoyl serine; by PORCN moiety is linked to residue Ser206. The tract at residues 238–266 (VEPVRASRNKRPTFLKIKKPLSYRKPMDT) is disordered linker. 6 disulfides stabilise this stretch: Cys278–Cys309, Cys294–Cys304, Cys308–Cys348, Cys324–Cys339, Cys326–Cys336, and Cys331–Cys332. N-linked (GlcNAc...) asparagine glycosylation occurs at Asn295.

This sequence belongs to the Wnt family. As to quaternary structure, forms a soluble 1:1 complex with AFM; this prevents oligomerization and is required for prolonged biological activity. The complex with AFM may represent the physiological form in body fluids. Interacts with PORCN. Interacts (via intrinsically disordered linker region) with RECK; interaction with RECK confers ligand selectivity for Wnt7 in brain endothelial cells and allows these cells to selectively respond to Wnt7. Interacts with FZD5. In terms of processing, palmitoleoylation is required for efficient binding to frizzled receptors. Depalmitoleoylation leads to Wnt signaling pathway inhibition.

Its subcellular location is the secreted. It localises to the extracellular space. The protein resides in the extracellular matrix. In terms of biological role, ligand for members of the frizzled family of seven transmembrane receptors that functions in the canonical Wnt/beta-catenin signaling pathway. Plays an important role in embryonic development, including dorsal versus ventral patterning during limb development, skeleton development and urogenital tract development. Required for central nervous system (CNS) angiogenesis and blood-brain barrier regulation. Required for normal, sexually dimorphic development of the Mullerian ducts, and for normal fertility in both sexes. Required for normal neural stem cell proliferation in the hippocampus dentate gyrus. Required for normal progress through the cell cycle in neural progenitor cells, for self-renewal of neural stem cells, and for normal neuronal differentiation and maturation. Promotes formation of synapses via its interaction with FZD5. The chain is Protein Wnt-7a (WNT7A) from Chlorocebus aethiops (Green monkey).